Here is a 568-residue protein sequence, read N- to C-terminus: 2-succinyl-5-enolpyruvyl-6-hydroxy-3-cyclohexene-1-carboxylate synthase (568 aa).

Belongs to the TPP enzyme family. MenD subfamily. As to quaternary structure, homodimer. Mg(2+) serves as cofactor. Mn(2+) is required as a cofactor. Requires thiamine diphosphate as cofactor.

The catalysed reaction is isochorismate + 2-oxoglutarate + H(+) = 5-enolpyruvoyl-6-hydroxy-2-succinyl-cyclohex-3-ene-1-carboxylate + CO2. It functions in the pathway quinol/quinone metabolism; 1,4-dihydroxy-2-naphthoate biosynthesis; 1,4-dihydroxy-2-naphthoate from chorismate: step 2/7. Its pathway is quinol/quinone metabolism; menaquinone biosynthesis. Its function is as follows. Catalyzes the thiamine diphosphate-dependent decarboxylation of 2-oxoglutarate and the subsequent addition of the resulting succinic semialdehyde-thiamine pyrophosphate anion to isochorismate to yield 2-succinyl-5-enolpyruvyl-6-hydroxy-3-cyclohexene-1-carboxylate (SEPHCHC). The protein is 2-succinyl-5-enolpyruvyl-6-hydroxy-3-cyclohexene-1-carboxylate synthase of Actinobacillus pleuropneumoniae serotype 3 (strain JL03).